Reading from the N-terminus, the 600-residue chain is DNA mismatch repair protein MutL (600 aa).

This sequence belongs to the DNA mismatch repair MutL/HexB family.

In terms of biological role, this protein is involved in the repair of mismatches in DNA. It is required for dam-dependent methyl-directed DNA mismatch repair. May act as a 'molecular matchmaker', a protein that promotes the formation of a stable complex between two or more DNA-binding proteins in an ATP-dependent manner without itself being part of a final effector complex. The polypeptide is DNA mismatch repair protein MutL (Sinorhizobium fredii (strain NBRC 101917 / NGR234)).